Consider the following 350-residue polypeptide: Pleckstrin (350 aa).

The PH 1 domain occupies 4 to 101 (KRIREGYLVK…WVRDIKKAIK (98 aa)). Position 64 is an N6-acetyllysine (Lys64). Phosphoserine occurs at positions 113 and 117. One can recognise a DEP domain in the interval 136-221 (PEKGIKELNL…NPDAFYYFPD (86 aa)). The 104-residue stretch at 244–347 (IIIKQGCLLK…WIKAIQVASR (104 aa)) folds into the PH 2 domain.

Major protein kinase C substrate of platelets. The polypeptide is Pleckstrin (Plek) (Rattus norvegicus (Rat)).